Reading from the N-terminus, the 112-residue chain is Protein FAM32A (112 aa).

The tract at residues threonine 23–aspartate 56 is disordered. A compositionally biased stretch (basic and acidic residues) spans lysine 45–aspartate 56.

It belongs to the FAM32 family.

The protein resides in the nucleus. In terms of biological role, may induce G2 arrest and apoptosis. May also increase cell sensitivity to apoptotic stimuli. The chain is Protein FAM32A (Fam32a) from Rattus norvegicus (Rat).